A 35-amino-acid chain; its full sequence is MEALVYTFLLVSTLGIIFFAIFFREPPKVPTKNTK.

A helical membrane pass occupies residues 3-23 (ALVYTFLLVSTLGIIFFAIFF).

It belongs to the PsbT family. As to quaternary structure, PSII is composed of 1 copy each of membrane proteins PsbA, PsbB, PsbC, PsbD, PsbE, PsbF, PsbH, PsbI, PsbJ, PsbK, PsbL, PsbM, PsbT, PsbY, PsbZ, Psb30/Ycf12, at least 3 peripheral proteins of the oxygen-evolving complex and a large number of cofactors. It forms dimeric complexes.

The protein localises to the plastid. Its subcellular location is the chloroplast thylakoid membrane. Functionally, found at the monomer-monomer interface of the photosystem II (PS II) dimer, plays a role in assembly and dimerization of PSII. PSII is a light-driven water plastoquinone oxidoreductase, using light energy to abstract electrons from H(2)O, generating a proton gradient subsequently used for ATP formation. This Pisum sativum (Garden pea) protein is Photosystem II reaction center protein T.